A 275-amino-acid polypeptide reads, in one-letter code: Exosome complex component RRP40 (275 aa).

N-acetylalanine is present on alanine 2. Lysine 151 participates in a covalent cross-link: Glycyl lysine isopeptide (Lys-Gly) (interchain with G-Cter in SUMO2).

This sequence belongs to the RRP40 family. Component of the RNA exosome core complex (Exo-9), composed of EXOSC1, EXOSC2, EXOSC3, EXOSC4, EXOSC5, EXOSC6, EXOSC7, EXOSC8 and EXOSC9; within the complex interacts with EXOSC5 and EXOSC9. The catalytically inactive RNA exosome core complex (Exo-9) associates with the catalytic subunit EXOSC10/RRP6. Exo-9 may associate with DIS3 to form the nucleolar exosome complex, or DIS3L to form the cytoplasmic exosome complex. Exo-9 is formed by a hexameric base ring consisting of the heterodimers EXOSC4-EXOSC9, EXOSC5-EXOSC8 and EXOSC6-EXOSC7, and a cap ring consisting of EXOSC1, EXOSC2 and EXOSC3. The RNA exosome complex associates with cofactors C1D/RRP47, MPHOSPH6/MPP6 and MTREX/MTR4. Interacts with MPHOSPH6/MPP6; the interaction is direct. Interacts with GTPBP1. Interacts with ZC3HAV1. Interacts with DDX17 only in the presence of ZC3HAV1 in an RNA-independent manner. Interacts with DHX36; this interaction occurs in a RNase-insensitive manner. Interacts with HBS1L isoform 2.

The protein resides in the cytoplasm. The protein localises to the nucleus. It is found in the nucleolus. Non-catalytic component of the RNA exosome complex which has 3'-&gt;5' exoribonuclease activity and participates in a multitude of cellular RNA processing and degradation events. In the nucleus, the RNA exosome complex is involved in proper maturation of stable RNA species such as rRNA, snRNA and snoRNA, in the elimination of RNA processing by-products and non-coding 'pervasive' transcripts, such as antisense RNA species and promoter-upstream transcripts (PROMPTs), and of mRNAs with processing defects, thereby limiting or excluding their export to the cytoplasm. The RNA exosome may be involved in Ig class switch recombination (CSR) and/or Ig variable region somatic hypermutation (SHM) by targeting AICDA deamination activity to transcribed dsDNA substrates. In the cytoplasm, the RNA exosome complex is involved in general mRNA turnover and specifically degrades inherently unstable mRNAs containing AU-rich elements (AREs) within their 3' untranslated regions, and in RNA surveillance pathways, preventing translation of aberrant mRNAs. It seems to be involved in degradation of histone mRNA. The catalytic inactive RNA exosome core complex of 9 subunits (Exo-9) is proposed to play a pivotal role in the binding and presentation of RNA for ribonucleolysis, and to serve as a scaffold for the association with catalytic subunits and accessory proteins or complexes. EXOSC3 as peripheral part of the Exo-9 complex stabilizes the hexameric ring of RNase PH-domain subunits through contacts with EXOSC9 and EXOSC5. This Bos taurus (Bovine) protein is Exosome complex component RRP40 (EXOSC3).